Consider the following 425-residue polypeptide: CAAX prenyl protease 1 homolog (425 aa).

A run of 5 helical transmembrane segments spans residues 3–23 (LPYLEAVLCFMILMYIFETYL), 62–80 (FHFIHEAVTILMDTTILYY), 109–129 (LAFLAGVMIWSQITDLPFSLY), 155–175 (GILLSILLGPPIVAAIIIIVQ), and 188–208 (FMFALSLVMMTIYPIVIAPLF). A Zn(2+)-binding site is contributed by His-284. The active site involves Glu-285. His-288 contributes to the Zn(2+) binding site. The next 2 helical transmembrane spans lie at 295-315 (VYSFVAVQLLMFLQFGGYTLV) and 332-352 (VIIGLIIFQHTIIPVQHLLSF). Glu-362 contributes to the Zn(2+) binding site. The Proton donor role is filled by Asp-366.

Belongs to the peptidase M48A family. Zn(2+) serves as cofactor.

The protein localises to the endoplasmic reticulum membrane. It carries out the reaction Hydrolyzes the peptide bond -P2-(S-farnesyl or geranylgeranyl)C-P1'-P2'-P3'-COOH where P1' and P2' are amino acids with aliphatic side chains and P3' is any C-terminal residue.. Functionally, proteolytically removes the C-terminal three residues of farnesylated proteins. The chain is CAAX prenyl protease 1 homolog (FACE1) from Oryza sativa subsp. japonica (Rice).